The chain runs to 152 residues: Xanthine-guanine phosphoribosyltransferase (152 aa).

5-phospho-alpha-D-ribose 1-diphosphate-binding positions include 37–38, R69, and 88–96; these read RG and DDLVDTGGT. Position 69 (R69) interacts with GMP. Residue D89 coordinates Mg(2+). Guanine contacts are provided by D92 and I135. Xanthine-binding residues include D92 and I135. GMP-binding positions include 92 to 96 and 134 to 135; these read DTGGT and WI.

The protein belongs to the purine/pyrimidine phosphoribosyltransferase family. XGPT subfamily. As to quaternary structure, homotetramer. Mg(2+) is required as a cofactor.

It localises to the cell inner membrane. The catalysed reaction is GMP + diphosphate = guanine + 5-phospho-alpha-D-ribose 1-diphosphate. It catalyses the reaction XMP + diphosphate = xanthine + 5-phospho-alpha-D-ribose 1-diphosphate. It carries out the reaction IMP + diphosphate = hypoxanthine + 5-phospho-alpha-D-ribose 1-diphosphate. The protein operates within purine metabolism; GMP biosynthesis via salvage pathway; GMP from guanine: step 1/1. Its pathway is purine metabolism; XMP biosynthesis via salvage pathway; XMP from xanthine: step 1/1. Purine salvage pathway enzyme that catalyzes the transfer of the ribosyl-5-phosphate group from 5-phospho-alpha-D-ribose 1-diphosphate (PRPP) to the N9 position of the 6-oxopurines guanine and xanthine to form the corresponding ribonucleotides GMP (guanosine 5'-monophosphate) and XMP (xanthosine 5'-monophosphate), with the release of PPi. To a lesser extent, also acts on hypoxanthine. This Escherichia fergusonii (strain ATCC 35469 / DSM 13698 / CCUG 18766 / IAM 14443 / JCM 21226 / LMG 7866 / NBRC 102419 / NCTC 12128 / CDC 0568-73) protein is Xanthine-guanine phosphoribosyltransferase.